A 143-amino-acid chain; its full sequence is MERISALGLDVGKKRIGVAGCDGTGLIATGLTTIERQSFPQDVQQLEALVKEREVQLLVIGLPYSMDGTIGFQAKKVQKFAKRLSTALELPIEYIDERLTSVEAETHLKSQKKYSRYNKGLVDRLAATIILQQWLDQRRASLI.

The protein belongs to the YqgF nuclease family.

The protein resides in the cytoplasm. In terms of biological role, could be a nuclease involved in processing of the 5'-end of pre-16S rRNA. In Crocosphaera subtropica (strain ATCC 51142 / BH68) (Cyanothece sp. (strain ATCC 51142)), this protein is Putative pre-16S rRNA nuclease.